Consider the following 166-residue polypeptide: Phosphopantetheine adenylyltransferase (166 aa).

Ser8 contributes to the substrate binding site. Residues 8 to 9 (SF) and His16 each bind ATP. Substrate-binding residues include Lys40, Thr72, and Arg86. Residues 87–89 (GLR), Glu97, and 122–128 (HSFLSSS) contribute to the ATP site.

Belongs to the bacterial CoaD family. In terms of assembly, homohexamer. The cofactor is Mg(2+).

The protein resides in the cytoplasm. It carries out the reaction (R)-4'-phosphopantetheine + ATP + H(+) = 3'-dephospho-CoA + diphosphate. It participates in cofactor biosynthesis; coenzyme A biosynthesis; CoA from (R)-pantothenate: step 4/5. Functionally, reversibly transfers an adenylyl group from ATP to 4'-phosphopantetheine, yielding dephospho-CoA (dPCoA) and pyrophosphate. This is Phosphopantetheine adenylyltransferase from Synechococcus sp. (strain RCC307).